The sequence spans 515 residues: Pre-glycoprotein polyprotein GP complex (515 aa).

G2 is lipidated: N-myristoyl glycine; by host. The Extracellular segment spans residues 2–17 (GQVIGFFQSLPEIINE). The chain crosses the membrane as a helical span at residues 18–33 (ALNIALICVALLATIK). At 34–58 (GMVNIWKSGLIQLLFFLTLAGRSCS) the chain is on the cytoplasmic side. Residue C57 participates in Zn(2+) binding. Residues 59 to 453 (HSFTIGRFHE…QGRTPLSLVD (395 aa)) are Extracellular-facing. Cystine bridges form between C87/C255, C300/C313, C322/C331, and C385/C406. Residues N90, N112, N127, N180, and N248 are each glycosylated (N-linked (GlcNAc...) asparagine; by host). N-linked (GlcNAc...) asparagine; by host glycosylation is found at N386, N394, and N416. The helical transmembrane segment at 454 to 474 (LCFWSTLFYISTLFAHLVGFP) threads the bilayer. Topologically, residues 475–515 (THRHLIGEGCPKPHRLTGSGICSCGHYGIPGKPVRWTKMSR) are cytoplasmic. 6 residues coordinate Zn(2+): H476, H478, C484, H488, C496, and C498.

This sequence belongs to the arenaviridae GPC protein family. Interacts with glycoprotein G2. Part of the GP complex (GP-C) together with glycoprotein G1 and glycoprotein G2. The GP-complex interacts with protein Z, which interacts with ribonucleocapsid; these interactions may induce virion budding. As to quaternary structure, homotrimer; disulfide-linked. In pre-fusion state, G1 homotrimers bind G2 homotrimers via ionic interactions. Part of the GP complex (GP-C) together with glycoprotein G2 and the stable signal peptide. The GP-complex interacts with protein Z, which interacts with ribonucleocapsid; these interactions may induce virion budding. In terms of assembly, homotrimer. Interacts with the stable signal peptide. In pre-fusion state, G2 homotrimers bind G1 homotrimers via ionic interactions. Part of the GP complex (GP-C) together with glycoprotein G1 and the stable signal peptide. Acidification in the endosome triggers rearrangements, which ultimately leads to a 6 helix bundle formed by the two heptad repeat domains (HR1 and HR2) in post-fusion state. The GP-complex interacts with protein Z, which interacts with ribonucleocapsid; these interactions may induce virion budding. Post-translationally, specific enzymatic cleavages in vivo yield mature proteins. GP-C polyprotein is cleaved in the endoplasmic reticulum by the host protease MBTPS1. Only cleaved glycoprotein is incorporated into virions. The SSP remains stably associated with the GP complex following cleavage by signal peptidase and plays crucial roles in the trafficking of GP through the secretory pathway. In terms of processing, myristoylation is necessary for GP2-mediated fusion activity.

Its subcellular location is the virion membrane. It is found in the host endoplasmic reticulum membrane. The protein resides in the host Golgi apparatus membrane. It localises to the host cell membrane. Functionally, functions as a cleaved signal peptide that is retained as the third component of the GP complex (GP-C). Helps to stabilize the spike complex in its native conformation. The SSP is required for efficient glycoprotein expression, post-translational maturation cleavage of G1 and G2, glycoprotein transport to the cell surface plasma membrane, formation of infectious virus particles, and acid pH-dependent glycoprotein-mediated cell fusion. Its function is as follows. Forms the virion spikes together with glycoprotein G2. The glycoprotein spike trimers are connected to the underlying matrix. Mediates virus attachment to host receptor alpha-dystroglycan DAG1. This attachment induces virion internalization predominantly through clathrin- and caveolin-independent endocytosis. In terms of biological role, forms the virion spikes together with glycoprotein G1. The glycoprotein spike trimers are connected to the underlying matrix. Class I viral fusion protein that directs fusion of viral and host endosomal membranes, leading to delivery of the nucleocapsid into the cytoplasm. Membrane fusion is mediated by irreversible conformational changes induced by acidification. This Latino mammarenavirus (isolate Rat/Bolivia/MARU 1924/1965) (LATV) protein is Pre-glycoprotein polyprotein GP complex.